The chain runs to 219 residues: Large ribosomal subunit protein bL25 (219 aa).

The interval 176-219 (VTVVPPTDEPSEEEVEAMEGESATEEPEVVGEDKEDDEEENKED) is disordered. Acidic residues predominate over residues 184 to 219 (EPSEEEVEAMEGESATEEPEVVGEDKEDDEEENKED).

It belongs to the bacterial ribosomal protein bL25 family. CTC subfamily. Part of the 50S ribosomal subunit; part of the 5S rRNA/L5/L18/L25 subcomplex. Contacts the 5S rRNA. Binds to the 5S rRNA independently of L5 and L18.

This is one of the proteins that binds to the 5S RNA in the ribosome where it forms part of the central protuberance. This Staphylococcus epidermidis (strain ATCC 35984 / DSM 28319 / BCRC 17069 / CCUG 31568 / BM 3577 / RP62A) protein is Large ribosomal subunit protein bL25.